The sequence spans 336 residues: Holliday junction branch migration complex subunit RuvB (336 aa).

The segment covering 1-11 (MDDDKLLSGDK) has biased composition (basic and acidic residues). The disordered stretch occupies residues 1-21 (MDDDKLLSGDKADDEEASLEK). A large ATPase domain (RuvB-L) region spans residues 1–184 (MDDDKLLSGD…FGIVEHMAYY (184 aa)). ATP is bound by residues leucine 23, arginine 24, glycine 65, lysine 68, threonine 69, threonine 70, 131-133 (EDF), arginine 174, tyrosine 184, and arginine 221. Position 69 (threonine 69) interacts with Mg(2+). The small ATPAse domain (RuvB-S) stretch occupies residues 185-255 (EVADLEDIVK…IVARSLTYLR (71 aa)). Residues 258–336 (DAGLDETDNK…HLGFPYPENK (79 aa)) are head domain (RuvB-H). Arginine 313 and arginine 318 together coordinate DNA.

Belongs to the RuvB family. In terms of assembly, homohexamer. Forms an RuvA(8)-RuvB(12)-Holliday junction (HJ) complex. HJ DNA is sandwiched between 2 RuvA tetramers; dsDNA enters through RuvA and exits via RuvB. An RuvB hexamer assembles on each DNA strand where it exits the tetramer. Each RuvB hexamer is contacted by two RuvA subunits (via domain III) on 2 adjacent RuvB subunits; this complex drives branch migration. In the full resolvosome a probable DNA-RuvA(4)-RuvB(12)-RuvC(2) complex forms which resolves the HJ.

It localises to the cytoplasm. It carries out the reaction ATP + H2O = ADP + phosphate + H(+). The RuvA-RuvB-RuvC complex processes Holliday junction (HJ) DNA during genetic recombination and DNA repair, while the RuvA-RuvB complex plays an important role in the rescue of blocked DNA replication forks via replication fork reversal (RFR). RuvA specifically binds to HJ cruciform DNA, conferring on it an open structure. The RuvB hexamer acts as an ATP-dependent pump, pulling dsDNA into and through the RuvAB complex. RuvB forms 2 homohexamers on either side of HJ DNA bound by 1 or 2 RuvA tetramers; 4 subunits per hexamer contact DNA at a time. Coordinated motions by a converter formed by DNA-disengaged RuvB subunits stimulates ATP hydrolysis and nucleotide exchange. Immobilization of the converter enables RuvB to convert the ATP-contained energy into a lever motion, pulling 2 nucleotides of DNA out of the RuvA tetramer per ATP hydrolyzed, thus driving DNA branch migration. The RuvB motors rotate together with the DNA substrate, which together with the progressing nucleotide cycle form the mechanistic basis for DNA recombination by continuous HJ branch migration. Branch migration allows RuvC to scan DNA until it finds its consensus sequence, where it cleaves and resolves cruciform DNA. The polypeptide is Holliday junction branch migration complex subunit RuvB (Lactiplantibacillus plantarum (strain ATCC BAA-793 / NCIMB 8826 / WCFS1) (Lactobacillus plantarum)).